Reading from the N-terminus, the 446-residue chain is Enolase (446 aa).

Serine 42 is a binding site for Mg(2+). Residue serine 42 is modified to Phosphoserine. The Pentapeptide insert motif lies at 104 to 108; it reads EWGWS. Lysine 133 bears the N6-acetyllysine mark. Lysine 138 is covalently cross-linked (Glycyl lysine isopeptide (Lys-Gly) (interchain with G-Cter in ubiquitin)). The residue at position 139 (tyrosine 139) is a Phosphotyrosine. Substrate is bound by residues histidine 166 and glutamate 175. Glutamate 218 acts as the Proton donor in catalysis. Aspartate 253 contacts Mg(2+). Positions 277-282 match the DKSLVK motif motif; sequence DKSLVK. Residues glutamate 304 and aspartate 331 each coordinate Mg(2+). Substrate-binding residues include glutamate 304 and aspartate 331. A Phosphothreonine modification is found at threonine 339. Lysine 356 acts as the Proton acceptor in catalysis. Lysine 375 bears the N6-acetyllysine mark. Substrate-binding positions include 383–386 and lysine 407; that span reads SHRS.

Belongs to the enolase family. Homodimer. Forms a complex at least composed of DegP, ENO and HSP70. Interacts with G-actin. Interacts (via the DKSLVK motif) with mammalian host PLG/plasminogen (present in the mosquito blood meal); the interaction occurs at the ookinete cell surface and is required for ookinete invasion of the mosquito midgut. Interacts with A.gambiae EBP; depending on the Plasmodium species, the interaction is either involved in ookinete invasion of the mosquito midgut (P.berghei) or is dispensable (P.falciparum). Requires Mg(2+) as cofactor.

The protein localises to the cytoplasm. It is found in the nucleus. It localises to the cytoskeleton. Its subcellular location is the cell surface. The protein resides in the cell membrane. The protein localises to the vacuole. It catalyses the reaction (2R)-2-phosphoglycerate = phosphoenolpyruvate + H2O. It participates in carbohydrate degradation; glycolysis; pyruvate from D-glyceraldehyde 3-phosphate: step 4/5. Its function is as follows. Glycolytic enzyme that catalyzes the conversion of 2-phosphoglycerate to phosphoenolpyruvate. In addition to glycolysis, involved in various processes such as parasite development and invasion. Plays an essential role during ookinete invasion of the mosquito vector midgut by mediating the interaction of the ookinete with the midgut epithelium and, further, by binding to mammalian host plasminogen in the blood meal, whose conversion to active plasmin promotes the invasion process. This is Enolase from Plasmodium berghei (strain Anka).